The chain runs to 119 residues: Autophagy-related protein 8C-like (119 aa).

The Phosphatidylethanolamine amidated glycine moiety is linked to residue Gly117. Positions 118-119 (SF) are cleaved as a propeptide — removed in mature form.

Belongs to the ATG8 family. As to quaternary structure, interacts with ATG4. Interacts with the Phytophtora infestans effector PexRD54. Interacts with JOKA2. In terms of processing, the C-terminal 2 residues are removed by ATG4 to expose Gly-117 at the C-terminus. The C-terminal Gly is then amidated with phosphatidylethanolamine by an activating system similar to that for ubiquitin. The phosphatidylethanolamine amidated glycine is required for autophagosome formation.

The protein localises to the cytoplasmic vesicle. It localises to the autophagosome membrane. The protein resides in the vacuole membrane. It is found in the cytoplasm. Its subcellular location is the cytoskeleton. In terms of biological role, ubiquitin-like modifier involved in autophagosomes formation. May mediate the delivery of the autophagosomes to the vacuole via the microtubule cytoskeleton. ATG8CL-mediated selective autophagy contributes to defense against the fungal pathogen Phytophtora infestans. This Solanum tuberosum (Potato) protein is Autophagy-related protein 8C-like.